We begin with the raw amino-acid sequence, 344 residues long: Fructose-1,6-bisphosphatase class 1 (344 aa).

Mg(2+) contacts are provided by glutamate 91, aspartate 110, leucine 112, and aspartate 113. Residues 113–116 (DGSS) and asparagine 200 each bind substrate. Glutamate 272 is a binding site for Mg(2+).

This sequence belongs to the FBPase class 1 family. Homotetramer. Mg(2+) serves as cofactor.

The protein localises to the cytoplasm. It carries out the reaction beta-D-fructose 1,6-bisphosphate + H2O = beta-D-fructose 6-phosphate + phosphate. It functions in the pathway carbohydrate biosynthesis; Calvin cycle. This Rhodopseudomonas palustris (strain BisA53) protein is Fructose-1,6-bisphosphatase class 1.